The following is a 276-amino-acid chain: Pantothenate synthetase (276 aa).

An ATP-binding site is contributed by 27–34 (MGALHRGH). The active-site Proton donor is His34. Gln58 provides a ligand contact to (R)-pantoate. Gln58 is a beta-alanine binding site. 147-150 (GKKD) contributes to the ATP binding site. Gln153 contacts (R)-pantoate. Residues Val176 and 184–187 (LSSR) each bind ATP.

This sequence belongs to the pantothenate synthetase family. As to quaternary structure, homodimer.

The protein localises to the cytoplasm. The enzyme catalyses (R)-pantoate + beta-alanine + ATP = (R)-pantothenate + AMP + diphosphate + H(+). Its pathway is cofactor biosynthesis; (R)-pantothenate biosynthesis; (R)-pantothenate from (R)-pantoate and beta-alanine: step 1/1. Its function is as follows. Catalyzes the condensation of pantoate with beta-alanine in an ATP-dependent reaction via a pantoyl-adenylate intermediate. This Helicobacter pylori (strain J99 / ATCC 700824) (Campylobacter pylori J99) protein is Pantothenate synthetase.